The following is a 637-amino-acid chain: Interleukin-17 receptor E (637 aa).

A signal peptide spans 1 to 24; sequence MGSPRLAALLLSQPLLFICLAVSA. Residues 25–415 are Extracellular-facing; that stretch reads QVACPCLPRW…LCPDVSHRHL (391 aa). Asn278 and Asn307 each carry an N-linked (GlcNAc...) asparagine glycan. A helical membrane pass occupies residues 416-436; it reads GLLILALLGLTTLLGVVLVLF. Residues 437–637 are Cytoplasmic-facing; the sequence is CRRLLPGPGR…TNSPCGFSCL (201 aa). An SEFIR domain is found at 447 to 583; the sequence is TRPVLLLHAA…LLRDLPRLLR (137 aa).

Forms heterodimers with IL17RE; the heterodimer binds IL17C.

Its subcellular location is the cell membrane. Specific functional receptor for IL17C, signaling through the NF-kappa-B and MAPK pathways. Requires TRAF3IP2 /ACT1 for signaling. Crucial regulator in innate immunity to bacterial pathogens. This Rattus norvegicus (Rat) protein is Interleukin-17 receptor E (Il17re).